The chain runs to 1489 residues: Chromatin-remodeling ATPase INO80 (1489 aa).

Disordered regions lie at residues 112–375 (PSIP…APSY) and 467–487 (EEAK…QVRR). 2 stretches are compositionally biased toward polar residues: residues 122 to 142 (SVVS…NSKK) and 149 to 162 (IKTS…SPAT). A compositionally biased stretch (basic residues) spans 164–177 (GRRRGAGGNRRVKR). The segment covering 179 to 190 (SNLSKTVRSRNA) has biased composition (polar residues). Over residues 198–207 (NENIENGGTT) the composition is skewed to low complexity. A compositionally biased stretch (basic and acidic residues) spans 235 to 252 (HTEKDASGSAADLDKDIV). Residues 268–289 (VSSTSLLSRNKSNKPTKSSPLT) are compositionally biased toward polar residues. Composition is skewed to acidic residues over residues 305-319 (GNED…DADD) and 327-371 (NPND…DDDF). Positions 518 to 643 (IWKDMARRDS…SHFIGSKIKT (126 aa)) constitute a DBINO domain. Residues 758–930 (ANLYDQGING…WALLHFIMPS (173 aa)) enclose the Helicase ATP-binding domain. 771 to 778 (DEMGLGKT) is a binding site for ATP. Residues 881 to 884 (DEAQ) carry the DEAQ box motif. The region spanning 1323–1479 (KLDELLVKLK…KAKENKQKII (157 aa)) is the Helicase C-terminal domain.

It belongs to the SNF2/RAD54 helicase family. Component of the INO80 chromatin-remodeling complex.

The protein localises to the nucleus. The catalysed reaction is ATP + H2O = ADP + phosphate + H(+). Its function is as follows. ATPase component of the INO80 complex which remodels chromatin by shifting nucleosomes and is involved in DNA repair. This Kluyveromyces lactis (strain ATCC 8585 / CBS 2359 / DSM 70799 / NBRC 1267 / NRRL Y-1140 / WM37) (Yeast) protein is Chromatin-remodeling ATPase INO80 (INO80).